Consider the following 98-residue polypeptide: MANVNIKPLEDRVLVQISEAETTTASGLVIPDSAKEKPQEGVVVAAGPGRFDGDDRVPMDIKEGDTVVFSKYGGTELKYNGEEYLLLNARDVLAIIEK.

The protein belongs to the GroES chaperonin family. As to quaternary structure, heptamer of 7 subunits arranged in a ring. Interacts with the chaperonin GroEL.

It localises to the cytoplasm. Together with the chaperonin GroEL, plays an essential role in assisting protein folding. The GroEL-GroES system forms a nano-cage that allows encapsulation of the non-native substrate proteins and provides a physical environment optimized to promote and accelerate protein folding. GroES binds to the apical surface of the GroEL ring, thereby capping the opening of the GroEL channel. This Corynebacterium diphtheriae (strain ATCC 700971 / NCTC 13129 / Biotype gravis) protein is Co-chaperonin GroES.